The sequence spans 1149 residues: ATP-dependent helicase/deoxyribonuclease subunit B (1149 aa).

Gly-8 to Thr-15 contributes to the ATP binding site. Residues Cys-784, Cys-1102, Cys-1105, and Cys-1111 each contribute to the [4Fe-4S] cluster site.

Belongs to the helicase family. AddB/RexB type 1 subfamily. Heterodimer of AddA and AddB. It depends on Mg(2+) as a cofactor. [4Fe-4S] cluster is required as a cofactor.

Functionally, the heterodimer acts as both an ATP-dependent DNA helicase and an ATP-dependent, dual-direction single-stranded exonuclease. Recognizes the chi site generating a DNA molecule suitable for the initiation of homologous recombination. The AddB subunit has 5' -&gt; 3' nuclease activity but not helicase activity. In Thermoanaerobacter pseudethanolicus (strain ATCC 33223 / 39E) (Clostridium thermohydrosulfuricum), this protein is ATP-dependent helicase/deoxyribonuclease subunit B.